A 311-amino-acid chain; its full sequence is Deoxyhypusine hydroxylase (311 aa).

5 HEAT-like PBS-type repeats span residues 69–95 (LKHEVAYVLGQTKNLHAAQYLRSVLEN), 102–128 (VRHEAAEALGALGDKDSLALLEDYFKN), 196–222 (ERYRAMFRLRDMGTDEACLALASGLDD), 228–254 (FKHEIAYVFGQLCNPVTVPALIKTLKD), and 261–287 (VRHEAAEALGSIATDECLPVLQSFLND). The Fe cation site is built by histidine 71, glutamate 72, histidine 104, and glutamate 105. 4 residues coordinate Fe cation: histidine 230, glutamate 231, histidine 263, and glutamate 264.

Belongs to the deoxyhypusine hydroxylase family. Fe(2+) serves as cofactor.

The protein resides in the cytoplasm. Its subcellular location is the nucleus. It carries out the reaction [eIF5A protein]-deoxyhypusine + AH2 + O2 = [eIF5A protein]-hypusine + A + H2O. It functions in the pathway protein modification; eIF5A hypusination. In terms of biological role, catalyzes the hydroxylation of the N(6)-(4-aminobutyl)-L-lysine intermediate to form hypusine, an essential post-translational modification only found in mature eIF-5A factor. The protein is Deoxyhypusine hydroxylase of Debaryomyces hansenii (strain ATCC 36239 / CBS 767 / BCRC 21394 / JCM 1990 / NBRC 0083 / IGC 2968) (Yeast).